Consider the following 155-residue polypeptide: Ribosomal RNA large subunit methyltransferase H (155 aa).

Residues Leu72, Gly103, and 122–127 (FGRMVW) each bind S-adenosyl-L-methionine.

It belongs to the RNA methyltransferase RlmH family. Homodimer.

The protein localises to the cytoplasm. It carries out the reaction pseudouridine(1915) in 23S rRNA + S-adenosyl-L-methionine = N(3)-methylpseudouridine(1915) in 23S rRNA + S-adenosyl-L-homocysteine + H(+). Its function is as follows. Specifically methylates the pseudouridine at position 1915 (m3Psi1915) in 23S rRNA. This is Ribosomal RNA large subunit methyltransferase H from Paracoccus denitrificans (strain Pd 1222).